A 93-amino-acid polypeptide reads, in one-letter code: Chaperone NapD (93 aa).

This sequence belongs to the NapD family. Interacts with the cytoplasmic NapA precursor.

It is found in the cytoplasm. Functionally, chaperone for NapA, the catalytic subunit of the periplasmic nitrate reductase. It binds directly and specifically to the twin-arginine signal peptide of NapA, preventing premature interaction with the Tat translocase and premature export. The chain is Chaperone NapD from Haemophilus influenzae (strain ATCC 51907 / DSM 11121 / KW20 / Rd).